Reading from the N-terminus, the 488-residue chain is Serine protease HTR4 (488 aa).

The first 35 residues, 1 to 35 (MSRSKMSSQRLWAVRAQFLLLWLLLWAAPVPWAEA), serve as a signal peptide directing secretion. An IGFBP N-terminal domain is found at 40–118 (VSLPCPDACD…RAWLGTCGCA (79 aa)). Disulfide bonds link cysteine 44–cysteine 70, cysteine 48–cysteine 72, cysteine 53–cysteine 73, cysteine 59–cysteine 76, cysteine 84–cysteine 98, and cysteine 92–cysteine 115. Residues 213–373 (GSGFIVSEDG…IPSDRIRQFL (161 aa)) are serine protease. Catalysis depends on charge relay system residues histidine 229, aspartate 259, and serine 337. The PDZ domain occupies 384–476 (KAPLQKKYLG…LSIIVLRGSQ (93 aa)).

It belongs to the peptidase S1C family.

The protein localises to the secreted. Functionally, serine protease. This Rattus norvegicus (Rat) protein is Serine protease HTR4 (Htra4).